Consider the following 89-residue polypeptide: UPF0145 protein MJ1170 (89 aa).

This sequence belongs to the UPF0145 family. Highly divergent.

In Methanocaldococcus jannaschii (strain ATCC 43067 / DSM 2661 / JAL-1 / JCM 10045 / NBRC 100440) (Methanococcus jannaschii), this protein is UPF0145 protein MJ1170.